Reading from the N-terminus, the 615-residue chain is Ankyrin repeat and LEM domain-containing protein 1 (615 aa).

3 ANK repeats span residues 39 to 71, 75 to 104, and 108 to 137; these read DGAA…DPNA, EALT…DPAL, and DGLR…RTRT. Positions 138–210 are disordered; the sequence is RTRIGAETQE…DKHGSSASPP (73 aa). A Nuclear export signal motif is present at residues 271–280; sequence LNARLQALTL. Positions 283–294 are enriched in polar residues; that stretch reads PNAAGFQSSPSS. The tract at residues 283 to 315 is disordered; it reads PNAAGFQSSPSSMPLLDRSPAHSPPRTPTPGAS. The 45-residue stretch at 355 to 399 folds into the LEM domain; it reads HLPVSTVSDLELLKGLRALGENPHPITPFTRQLYHQQLEEAQIAP. Positions 448–566 constitute a GIY-YIG domain; sequence KSSFTYLLLD…ALGIQTLTNQ (119 aa). The Nuclear localization signal signature appears at 579-586; sequence PPARRRRL.

In terms of assembly, interacts (via LEM domain) with BANF1; the interaction may favor BANF1 dimerization. Expression is predominant in adult bone marrow.

Its subcellular location is the cytoplasm. It is found in the nucleus. In terms of biological role, endonuclease that probably plays a role in the DNA damage response and DNA repair. The protein is Ankyrin repeat and LEM domain-containing protein 1 (ANKLE1) of Homo sapiens (Human).